A 65-amino-acid chain; its full sequence is Large ribosomal subunit protein bL35 (65 aa).

This sequence belongs to the bacterial ribosomal protein bL35 family.

This is Large ribosomal subunit protein bL35 from Caldicellulosiruptor bescii (strain ATCC BAA-1888 / DSM 6725 / KCTC 15123 / Z-1320) (Anaerocellum thermophilum).